The following is a 365-amino-acid chain: Aminomethyltransferase (365 aa).

This sequence belongs to the GcvT family. As to quaternary structure, the glycine cleavage system is composed of four proteins: P, T, L and H.

It catalyses the reaction N(6)-[(R)-S(8)-aminomethyldihydrolipoyl]-L-lysyl-[protein] + (6S)-5,6,7,8-tetrahydrofolate = N(6)-[(R)-dihydrolipoyl]-L-lysyl-[protein] + (6R)-5,10-methylene-5,6,7,8-tetrahydrofolate + NH4(+). Its function is as follows. The glycine cleavage system catalyzes the degradation of glycine. The chain is Aminomethyltransferase from Chlorobium phaeobacteroides (strain DSM 266 / SMG 266 / 2430).